A 624-amino-acid polypeptide reads, in one-letter code: Dihydroxy-acid dehydratase (624 aa).

Position 81 (D81) interacts with Mg(2+). C122 lines the [2Fe-2S] cluster pocket. 2 residues coordinate Mg(2+): D123 and K124. N6-carboxylysine is present on K124. Residue C195 participates in [2Fe-2S] cluster binding. Position 499 (E499) interacts with Mg(2+). Catalysis depends on S525, which acts as the Proton acceptor.

It belongs to the IlvD/Edd family. Homodimer. It depends on [2Fe-2S] cluster as a cofactor. The cofactor is Mg(2+).

The enzyme catalyses (2R)-2,3-dihydroxy-3-methylbutanoate = 3-methyl-2-oxobutanoate + H2O. It carries out the reaction (2R,3R)-2,3-dihydroxy-3-methylpentanoate = (S)-3-methyl-2-oxopentanoate + H2O. It participates in amino-acid biosynthesis; L-isoleucine biosynthesis; L-isoleucine from 2-oxobutanoate: step 3/4. It functions in the pathway amino-acid biosynthesis; L-valine biosynthesis; L-valine from pyruvate: step 3/4. Functions in the biosynthesis of branched-chain amino acids. Catalyzes the dehydration of (2R,3R)-2,3-dihydroxy-3-methylpentanoate (2,3-dihydroxy-3-methylvalerate) into 2-oxo-3-methylpentanoate (2-oxo-3-methylvalerate) and of (2R)-2,3-dihydroxy-3-methylbutanoate (2,3-dihydroxyisovalerate) into 2-oxo-3-methylbutanoate (2-oxoisovalerate), the penultimate precursor to L-isoleucine and L-valine, respectively. This Shewanella baltica (strain OS155 / ATCC BAA-1091) protein is Dihydroxy-acid dehydratase.